Reading from the N-terminus, the 176-residue chain is NAD(P)H-quinone oxidoreductase subunit 6, chloroplastic (176 aa).

The next 5 helical transmembrane spans lie at 10–30, 32–52, 61–81, 95–115, and 152–172; these read FILV…VLLP, PIYS…LYIL, AQLL…VMFL, VGDG…ITTI, and FLIP…GAIA.

This sequence belongs to the complex I subunit 6 family. NDH is composed of at least 16 different subunits, 5 of which are encoded in the nucleus.

The protein resides in the plastid. The protein localises to the chloroplast thylakoid membrane. The enzyme catalyses a plastoquinone + NADH + (n+1) H(+)(in) = a plastoquinol + NAD(+) + n H(+)(out). It catalyses the reaction a plastoquinone + NADPH + (n+1) H(+)(in) = a plastoquinol + NADP(+) + n H(+)(out). NDH shuttles electrons from NAD(P)H:plastoquinone, via FMN and iron-sulfur (Fe-S) centers, to quinones in the photosynthetic chain and possibly in a chloroplast respiratory chain. The immediate electron acceptor for the enzyme in this species is believed to be plastoquinone. Couples the redox reaction to proton translocation, and thus conserves the redox energy in a proton gradient. This chain is NAD(P)H-quinone oxidoreductase subunit 6, chloroplastic (ndhG), found in Trachelium caeruleum (Blue throatwort).